The primary structure comprises 129 residues: Glycophorin-A (129 aa).

An N-terminal signal peptide occupies residues 1–17 (MYEKIVIVLLLSGYIST). Glutamine 18 is subject to Pyrrolidone carboxylic acid. Residues 18–82 (QDVTEIIPHE…QLVHIFSEPV (65 aa)) are Extracellular-facing. 2 O-linked (GalNAc...) serine glycosylation sites follow: serine 29 and serine 30. An O-linked (GalNAc...) threonine glycan is attached at threonine 34. Residue serine 40 is glycosylated (O-linked (GalNAc...) serine). Residues threonine 41 and threonine 48 are each glycosylated (O-linked (GalNAc...) threonine). A glycan (O-linked (GalNAc...) serine) is linked at serine 56. Residues 83 to 103 (IIGIIYAVMLGIIITILSIAF) form a helical membrane-spanning segment. Over 104–129 (CIGQLTKKSSLPAQVASPEDVDPEVL) the chain is Cytoplasmic.

The protein belongs to the glycophorin-A family. In terms of assembly, homodimer. Component of the ankyrin-1 complex in the erythrocyte, composed of ANK1, RHCE, RHAG, SLC4A1, EPB42, GYPA, GYPB and AQP1. Interacts with SLC4A1; a GYPA monomer is bound at each end of the SLC4A1 dimer forming a heterotetramer.

It is found in the membrane. Component of the ankyrin-1 complex, a multiprotein complex involved in the stability and shape of the erythrocyte membrane. Glycophorin A is the major intrinsic membrane protein of the erythrocyte. The N-terminal glycosylated segment, which lies outside the erythrocyte membrane, has MN blood group receptors. Appears to be important for the function of SLC4A1 and is required for high activity of SLC4A1. May be involved in translocation of SLC4A1 to the plasma membrane. In Canis lupus familiaris (Dog), this protein is Glycophorin-A.